Here is a 416-residue protein sequence, read N- to C-terminus: MTRDIQTMAVKDVKKVVLAYSGGLDTSVILRWLQTTYNCEVVTFTADLGQGEELEPARRKAEMFGVKEIFVDDLRETFVKDFVFPMFRANAVYEGQYLLGTSIARPLIAQRQIEIAELTGADAVAHGATGKGNDQVRFELSYYALKPDVKVIAPWREWDLTSRTKLLEFAEANQIPIAKDKRGEAPFSVDANLLHSSSEGKLLEDPAEEPDEIVYQRTISPEAAPDKATIITIDFEHGDPVAIDGIRLSPATLLAKLNELGKANGIGRLDLVENRFVGMKSRGVYETPGGTILLVAHRGIESITLDREAAHLKDSLMPRYAELIYNGFWFSPERRMLQAAIDESQKSVTGRVRLKLYKGNTIVIGRESPNSLYSLKHVTFEDDQGAYDQVDAQGFIKLQSLRLRLAAIAGRRGGSL.

ATP is bound by residues 19 to 27 (AYSGGLDTS) and A46. L-citrulline is bound by residues Y97 and S102. ATP is bound at residue G127. The L-aspartate site is built by T129, N133, and D134. Residue N133 coordinates L-citrulline. L-citrulline-binding residues include R137, S188, S197, E273, and Y285.

It belongs to the argininosuccinate synthase family. Type 1 subfamily. As to quaternary structure, homotetramer.

Its subcellular location is the cytoplasm. It catalyses the reaction L-citrulline + L-aspartate + ATP = 2-(N(omega)-L-arginino)succinate + AMP + diphosphate + H(+). The protein operates within amino-acid biosynthesis; L-arginine biosynthesis; L-arginine from L-ornithine and carbamoyl phosphate: step 2/3. The protein is Argininosuccinate synthase of Granulibacter bethesdensis (strain ATCC BAA-1260 / CGDNIH1).